The primary structure comprises 633 residues: Threonine--tRNA ligase (633 aa).

Positions 1–61 (MINIHFSNNL…IENCTFEVIT (61 aa)) constitute a TGS domain. The segment at 242–533 (DHRKIGRELE…LIEHHSGKFP (292 aa)) is catalytic. Zn(2+) is bound by residues cysteine 333, histidine 384, and histidine 510.

This sequence belongs to the class-II aminoacyl-tRNA synthetase family. Homodimer. The cofactor is Zn(2+).

It is found in the cytoplasm. It catalyses the reaction tRNA(Thr) + L-threonine + ATP = L-threonyl-tRNA(Thr) + AMP + diphosphate + H(+). Functionally, catalyzes the attachment of threonine to tRNA(Thr) in a two-step reaction: L-threonine is first activated by ATP to form Thr-AMP and then transferred to the acceptor end of tRNA(Thr). Also edits incorrectly charged L-seryl-tRNA(Thr). The chain is Threonine--tRNA ligase from Ehrlichia chaffeensis (strain ATCC CRL-10679 / Arkansas).